Here is a 184-residue protein sequence, read N- to C-terminus: Potassium-transporting ATPase KdpC subunit (184 aa).

The chain crosses the membrane as a helical span at residues 6–26; sequence TAVLYTIISAVFLGLGYPLIM.

It belongs to the KdpC family. As to quaternary structure, the system is composed of three essential subunits: KdpA, KdpB and KdpC.

The protein localises to the cell inner membrane. In terms of biological role, part of the high-affinity ATP-driven potassium transport (or Kdp) system, which catalyzes the hydrolysis of ATP coupled with the electrogenic transport of potassium into the cytoplasm. This subunit acts as a catalytic chaperone that increases the ATP-binding affinity of the ATP-hydrolyzing subunit KdpB by the formation of a transient KdpB/KdpC/ATP ternary complex. This Acidobacterium capsulatum (strain ATCC 51196 / DSM 11244 / BCRC 80197 / JCM 7670 / NBRC 15755 / NCIMB 13165 / 161) protein is Potassium-transporting ATPase KdpC subunit.